Here is a 449-residue protein sequence, read N- to C-terminus: NADH-quinone oxidoreductase subunit D (449 aa).

It belongs to the complex I 49 kDa subunit family. NDH-1 is composed of 14 different subunits. Subunits NuoB, C, D, E, F, and G constitute the peripheral sector of the complex.

It localises to the cell membrane. The enzyme catalyses a quinone + NADH + 5 H(+)(in) = a quinol + NAD(+) + 4 H(+)(out). NDH-1 shuttles electrons from NADH, via FMN and iron-sulfur (Fe-S) centers, to quinones in the respiratory chain. The immediate electron acceptor for the enzyme in this species is believed to be a menaquinone. Couples the redox reaction to proton translocation (for every two electrons transferred, four hydrogen ions are translocated across the cytoplasmic membrane), and thus conserves the redox energy in a proton gradient. This chain is NADH-quinone oxidoreductase subunit D, found in Saccharopolyspora erythraea (strain ATCC 11635 / DSM 40517 / JCM 4748 / NBRC 13426 / NCIMB 8594 / NRRL 2338).